The following is a 345-amino-acid chain: Holliday junction branch migration complex subunit RuvB (345 aa).

The interval 1-186 (MSTDPDEREV…FGFTAHMDFY (186 aa)) is large ATPase domain (RuvB-L). ATP-binding positions include Leu25, Arg26, Gly67, Lys70, Thr71, Ser72, 133–135 (EDF), Arg176, Tyr186, and Arg223. Position 71 (Thr71) interacts with Mg(2+). The tract at residues 187 to 257 (EPAELERVLV…VAKAALAVYD (71 aa)) is small ATPAse domain (RuvB-S). Positions 260-345 (ELGLDRLDRA…AGANQPGLFE (86 aa)) are head domain (RuvB-H). Residues Arg315 and Arg320 each contribute to the DNA site.

The protein belongs to the RuvB family. Homohexamer. Forms an RuvA(8)-RuvB(12)-Holliday junction (HJ) complex. HJ DNA is sandwiched between 2 RuvA tetramers; dsDNA enters through RuvA and exits via RuvB. An RuvB hexamer assembles on each DNA strand where it exits the tetramer. Each RuvB hexamer is contacted by two RuvA subunits (via domain III) on 2 adjacent RuvB subunits; this complex drives branch migration. In the full resolvosome a probable DNA-RuvA(4)-RuvB(12)-RuvC(2) complex forms which resolves the HJ.

It is found in the cytoplasm. The catalysed reaction is ATP + H2O = ADP + phosphate + H(+). Its function is as follows. The RuvA-RuvB-RuvC complex processes Holliday junction (HJ) DNA during genetic recombination and DNA repair, while the RuvA-RuvB complex plays an important role in the rescue of blocked DNA replication forks via replication fork reversal (RFR). RuvA specifically binds to HJ cruciform DNA, conferring on it an open structure. The RuvB hexamer acts as an ATP-dependent pump, pulling dsDNA into and through the RuvAB complex. RuvB forms 2 homohexamers on either side of HJ DNA bound by 1 or 2 RuvA tetramers; 4 subunits per hexamer contact DNA at a time. Coordinated motions by a converter formed by DNA-disengaged RuvB subunits stimulates ATP hydrolysis and nucleotide exchange. Immobilization of the converter enables RuvB to convert the ATP-contained energy into a lever motion, pulling 2 nucleotides of DNA out of the RuvA tetramer per ATP hydrolyzed, thus driving DNA branch migration. The RuvB motors rotate together with the DNA substrate, which together with the progressing nucleotide cycle form the mechanistic basis for DNA recombination by continuous HJ branch migration. Branch migration allows RuvC to scan DNA until it finds its consensus sequence, where it cleaves and resolves cruciform DNA. This chain is Holliday junction branch migration complex subunit RuvB, found in Mycobacterium marinum (strain ATCC BAA-535 / M).